We begin with the raw amino-acid sequence, 551 residues long: Glutamate--tRNA ligase (551 aa).

The 'HIGH' region motif lies at 100–110 (PNPNGPPTLGS).

This sequence belongs to the class-I aminoacyl-tRNA synthetase family. Glutamate--tRNA ligase type 2 subfamily.

It localises to the cytoplasm. It carries out the reaction tRNA(Glu) + L-glutamate + ATP = L-glutamyl-tRNA(Glu) + AMP + diphosphate. In terms of biological role, catalyzes the attachment of glutamate to tRNA(Glu) in a two-step reaction: glutamate is first activated by ATP to form Glu-AMP and then transferred to the acceptor end of tRNA(Glu). This chain is Glutamate--tRNA ligase, found in Archaeoglobus fulgidus (strain ATCC 49558 / DSM 4304 / JCM 9628 / NBRC 100126 / VC-16).